A 440-amino-acid chain; its full sequence is Protein arginine N-methyltransferase 2 (440 aa).

The interval 147–194 (LSSGSEDGDEEMEVQQDDDEEAPQLVSTEDVEPTVEEPKFIPPDAKEK) is disordered. Acidic residues predominate over residues 152 to 168 (EDGDEEMEVQQDDDEEA). Positions 182–194 (EEPKFIPPDAKEK) are enriched in basic and acidic residues. The region spanning 192–440 (KEKQVTSEEY…RYAVGTSNRL (249 aa)) is the RMT2 domain. Residues tyrosine 201, methionine 230, 252 to 257 (FGMGIV), 273 to 275 (EAH), 310 to 311 (WQ), and aspartate 330 contribute to the S-adenosyl-L-methionine site.

It belongs to the class I-like SAM-binding methyltransferase superfamily. RMT2 methyltransferase family. In terms of assembly, monomer.

Its subcellular location is the cytoplasm. The protein localises to the nucleus. Its function is as follows. S-adenosyl-L-methionine-dependent protein-arginine N-methyltransferase that methylates the delta-nitrogen atom of arginine residues to form N5-methylarginine (type IV) in target proteins. Monomethylates ribosomal protein L12. This chain is Protein arginine N-methyltransferase 2, found in Gibberella zeae (strain ATCC MYA-4620 / CBS 123657 / FGSC 9075 / NRRL 31084 / PH-1) (Wheat head blight fungus).